A 428-amino-acid chain; its full sequence is tRNA(Ile)-lysidine synthase (428 aa).

ATP is bound at residue 28–33 (SGGVDS).

Belongs to the tRNA(Ile)-lysidine synthase family.

It is found in the cytoplasm. It carries out the reaction cytidine(34) in tRNA(Ile2) + L-lysine + ATP = lysidine(34) in tRNA(Ile2) + AMP + diphosphate + H(+). Functionally, ligates lysine onto the cytidine present at position 34 of the AUA codon-specific tRNA(Ile) that contains the anticodon CAU, in an ATP-dependent manner. Cytidine is converted to lysidine, thus changing the amino acid specificity of the tRNA from methionine to isoleucine. In Streptococcus pyogenes serotype M6 (strain ATCC BAA-946 / MGAS10394), this protein is tRNA(Ile)-lysidine synthase.